Here is a 210-residue protein sequence, read N- to C-terminus: Ribosomal RNA small subunit methyltransferase G (210 aa).

S-adenosyl-L-methionine contacts are provided by residues Gly77, Phe82, 100–102 (ERS), 128–129 (VE), and Arg141.

The protein belongs to the methyltransferase superfamily. RNA methyltransferase RsmG family.

It localises to the cytoplasm. Specifically methylates the N7 position of a guanine in 16S rRNA. The chain is Ribosomal RNA small subunit methyltransferase G from Borrelia duttonii (strain Ly).